We begin with the raw amino-acid sequence, 218 residues long: Protein GrpE (218 aa).

Positions 1 to 21 are enriched in basic and acidic residues; the sequence is MSDKQREAERQQSEDKAHSEA. Positions 1-66 are disordered; sequence MSDKQREAER…LEEARARAEE (66 aa). The segment covering 24–36 has biased composition (low complexity); it reads AEAGQAPEAQAAE.

Belongs to the GrpE family. Homodimer.

The protein resides in the cytoplasm. In terms of biological role, participates actively in the response to hyperosmotic and heat shock by preventing the aggregation of stress-denatured proteins, in association with DnaK and GrpE. It is the nucleotide exchange factor for DnaK and may function as a thermosensor. Unfolded proteins bind initially to DnaJ; upon interaction with the DnaJ-bound protein, DnaK hydrolyzes its bound ATP, resulting in the formation of a stable complex. GrpE releases ADP from DnaK; ATP binding to DnaK triggers the release of the substrate protein, thus completing the reaction cycle. Several rounds of ATP-dependent interactions between DnaJ, DnaK and GrpE are required for fully efficient folding. The chain is Protein GrpE from Alkalilimnicola ehrlichii (strain ATCC BAA-1101 / DSM 17681 / MLHE-1).